Reading from the N-terminus, the 511-residue chain is Maturase K (511 aa).

Belongs to the intron maturase 2 family. MatK subfamily.

The protein resides in the plastid. It is found in the chloroplast. Its function is as follows. Usually encoded in the trnK tRNA gene intron. Probably assists in splicing its own and other chloroplast group II introns. The protein is Maturase K of Hordeum secalinum (Meadow barley).